The primary structure comprises 297 residues: Pyridoxal 5'-phosphate synthase subunit PdxS (297 aa).

Residue aspartate 27 coordinates D-ribose 5-phosphate. Catalysis depends on lysine 84, which acts as the Schiff-base intermediate with D-ribose 5-phosphate. Glycine 156 serves as a coordination point for D-ribose 5-phosphate. Position 168 (arginine 168) interacts with D-glyceraldehyde 3-phosphate. D-ribose 5-phosphate contacts are provided by residues glycine 217 and 238–239 (GS).

This sequence belongs to the PdxS/SNZ family. As to quaternary structure, in the presence of PdxT, forms a dodecamer of heterodimers.

It carries out the reaction aldehydo-D-ribose 5-phosphate + D-glyceraldehyde 3-phosphate + L-glutamine = pyridoxal 5'-phosphate + L-glutamate + phosphate + 3 H2O + H(+). The protein operates within cofactor biosynthesis; pyridoxal 5'-phosphate biosynthesis. Catalyzes the formation of pyridoxal 5'-phosphate from ribose 5-phosphate (RBP), glyceraldehyde 3-phosphate (G3P) and ammonia. The ammonia is provided by the PdxT subunit. Can also use ribulose 5-phosphate and dihydroxyacetone phosphate as substrates, resulting from enzyme-catalyzed isomerization of RBP and G3P, respectively. In Corynebacterium efficiens (strain DSM 44549 / YS-314 / AJ 12310 / JCM 11189 / NBRC 100395), this protein is Pyridoxal 5'-phosphate synthase subunit PdxS.